The primary structure comprises 432 residues: tRNA(Ile)-lysidine synthase (432 aa).

Residue 20 to 25 (SGGLDS) participates in ATP binding.

It belongs to the tRNA(Ile)-lysidine synthase family.

It localises to the cytoplasm. It catalyses the reaction cytidine(34) in tRNA(Ile2) + L-lysine + ATP = lysidine(34) in tRNA(Ile2) + AMP + diphosphate + H(+). Ligates lysine onto the cytidine present at position 34 of the AUA codon-specific tRNA(Ile) that contains the anticodon CAU, in an ATP-dependent manner. Cytidine is converted to lysidine, thus changing the amino acid specificity of the tRNA from methionine to isoleucine. This is tRNA(Ile)-lysidine synthase from Shigella flexneri.